The chain runs to 671 residues: Beta-galactosidase 1 (671 aa).

A signal peptide spans 1 to 18 (MKLIVLIFFLLFINLNYC). The Proton donor role is filled by glutamate 200. Asparagine 228 carries N-linked (GlcNAc...) asparagine glycosylation. Glutamate 288 functions as the Nucleophile in the catalytic mechanism. 7 N-linked (GlcNAc...) asparagine glycosylation sites follow: asparagine 321, asparagine 391, asparagine 400, asparagine 499, asparagine 509, asparagine 564, and asparagine 595.

The protein belongs to the glycosyl hydrolase 35 family.

Its subcellular location is the lysosome. It catalyses the reaction Hydrolysis of terminal non-reducing beta-D-galactose residues in beta-D-galactosides.. In terms of biological role, cleaves beta-linked terminal galactosyl residues from gangliosides, glycoproteins, and glycosaminoglycans. This chain is Beta-galactosidase 1 (glb1), found in Dictyostelium discoideum (Social amoeba).